A 221-amino-acid polypeptide reads, in one-letter code: Max dimerization protein 1 (221 aa).

A Nuclear localization signal motif is present at residues 21–49 (RREREAEHGYASMLPYNNKDRDALKRRNK). 2 disordered regions span residues 30–68 (YASM…EKNR) and 173–204 (TGDL…YSST). The bHLH domain occupies 56–108 (SSRSTHNEMEKNRRAHLRLCLEKLKGLVPLGPESSRHTTLSLLTKAKLHIKKL). The segment covering 175 to 184 (DLDWSSSSVS) has biased composition (low complexity). Residues 191–204 (SMQSLGSDEGYSST) are compositionally biased toward polar residues.

In terms of assembly, heterodimer with MAX; the interaction is required for DNA-binding. DNA binding requires dimerization with another bHLH protein; does not form homodimers, and does not bind to DNA in the absence of MAX in vitro. Interacts with RNF17. Post-translationally, ubiquitinated by BIRC2/c-IAP1, leading to its subsequent degradation by the proteasome.

It is found in the nucleus. Functionally, component of a transcriptional repressor complex together with MAX. In complex with MAX binds to the core DNA sequence 5'-CAC[GA]TG-3'. Antagonizes MYC transcriptional activity by competing with MYC for MAX binding. Binds to the TERT promoter and represses telomerase expression, possibly by interfering with MYC binding. This is Max dimerization protein 1 (MXD1) from Homo sapiens (Human).